Here is a 375-residue protein sequence, read N- to C-terminus: MSQPKKRKLESGGGGEGGEGTEEEDGAEREAALERPRRTKRERDQLYYECYSDVSVHEEMIADRVRTDAYRLGILRNWAALRGKTVLDVGAGTGILSIFCAQAGARRVYAVEASAIWQQAREVVRFNGLEDRVHVLPGPVETVELPEQVDAIVSEWMGYGLLHESMLSSVLHARTKWLKEGGLLLPASAELFIAPISDQMLEWRLGFWSQVKQHYGVDMSCLEGFATRCLMGHSEIVVQGLSGEDVLARPQRFAQLELSRAGLEQELEAGVGGRFRCSCYGSAPMHGFAIWFQVTFPGGESEKPLVLSTSPFHPATHWKQALLYLNEPVQVEQDTDVSGEITLLPSRDNPRRLRVLLRYKVGDQEEKTKDFAMED.

The interval 1–38 (MSQPKKRKLESGGGGEGGEGTEEEDGAEREAALERPRR) is disordered. Position 21 is a phosphothreonine (T21). Basic and acidic residues predominate over residues 28-38 (EREAALERPRR). Asymmetric dimethylarginine; by autocatalysis is present on residues R29, R35, and R37. One can recognise an SAM-dependent MTase PRMT-type domain in the interval 44-374 (DQLYYECYSD…EEKTKDFAME (331 aa)). The S-adenosyl-L-methionine site is built by H57, R66, G90, E112, and E141. Active-site residues include E155 and E164.

Belongs to the class I-like SAM-binding methyltransferase superfamily. Protein arginine N-methyltransferase family. PRMT6 subfamily. As to quaternary structure, interacts with EPB41L3 and NCOA1. (Microbial infection) Interacts with (and methylates) HIV-1 Tat, Rev and Nucleocapsid protein p7 (NC). In terms of assembly, (Microbial infection) Interacts with human cytomegalovirus protein UL69. Automethylation enhances its stability and antiretroviral activity. In terms of tissue distribution, highly expressed in kidney and testis.

The protein resides in the nucleus. The enzyme catalyses L-arginyl-[protein] + 2 S-adenosyl-L-methionine = N(omega),N(omega)-dimethyl-L-arginyl-[protein] + 2 S-adenosyl-L-homocysteine + 2 H(+). Functionally, arginine methyltransferase that can catalyze the formation of both omega-N monomethylarginine (MMA) and asymmetrical dimethylarginine (aDMA), with a strong preference for the formation of aDMA. Preferentially methylates arginyl residues present in a glycine and arginine-rich domain and displays preference for monomethylated substrates. Specifically mediates the asymmetric dimethylation of histone H3 'Arg-2' to form H3R2me2a. H3R2me2a represents a specific tag for epigenetic transcriptional repression and is mutually exclusive with methylation on histone H3 'Lys-4' (H3K4me2 and H3K4me3). Acts as a transcriptional repressor of various genes such as HOXA2, THBS1 and TP53. Repression of TP53 blocks cellular senescence. Also methylates histone H2A and H4 'Arg-3' (H2AR3me and H4R3me, respectively). Acts as a regulator of DNA base excision during DNA repair by mediating the methylation of DNA polymerase beta (POLB), leading to the stimulation of its polymerase activity by enhancing DNA binding and processivity. Methylates HMGA1. Regulates alternative splicing events. Acts as a transcriptional coactivator of a number of steroid hormone receptors including ESR1, ESR2, PGR and NR3C1. Promotes fasting-induced transcriptional activation of the gluconeogenic program through methylation of the CRTC2 transcription coactivator. May play a role in innate immunity against HIV-1 in case of infection by methylating and impairing the function of various HIV-1 proteins such as Tat, Rev and Nucleocapsid protein p7 (NC). Methylates GPS2, protecting GPS2 from ubiquitination and degradation. Methylates SIRT7, inhibiting SIRT7 histone deacetylase activity and promoting mitochondria biogenesis. In Homo sapiens (Human), this protein is Protein arginine N-methyltransferase 6 (PRMT6).